Here is a 324-residue protein sequence, read N- to C-terminus: Putative S-adenosyl-L-methionine-dependent methyltransferase MMAR_1059 (324 aa).

S-adenosyl-L-methionine is bound by residues Asp-138 and 167-168 (DL).

This sequence belongs to the UPF0677 family.

Functionally, exhibits S-adenosyl-L-methionine-dependent methyltransferase activity. This is Putative S-adenosyl-L-methionine-dependent methyltransferase MMAR_1059 from Mycobacterium marinum (strain ATCC BAA-535 / M).